An 819-amino-acid chain; its full sequence is Advillin (819 aa).

A core region spans residues 1–731 (MSLSSAFRTV…YEQLKNELGD (731 aa)). The Gelsolin-like 1 repeat unit spans residues 24 to 105 (MELVLVPLSA…VQYHESDTFR (82 aa)). At Tyr-85 the chain carries Phosphotyrosine. A 1,2-diacyl-sn-glycero-3-phospho-(1D-myo-inositol-4,5-bisphosphate) is bound by residues 109–116 (KRGIIYKK) and 135–143 (RLLHVKGKR). Gelsolin-like repeat units lie at residues 144 to 215 (NIRA…KEAA), 265 to 339 (TEVA…SAMF), 407 to 486 (LVPV…RHFM), 524 to 592 (NTKA…PEFW), and 631 to 704 (TEVT…PPTF). Residues 628-819 (FLVTEVTDFT…LQLKKEAGLF (192 aa)) form a required for interaction with F-actin region. The interval 731-819 (DATAIVRITT…LQLKKEAGLF (89 aa)) is headpiece. Positions 753–819 (ESGPKYYPVE…LQLKKEAGLF (67 aa)) constitute an HP domain. At Tyr-758 the chain carries Phosphotyrosine.

Belongs to the villin/gelsolin family. Associates (via C-terminus) with actin. Interacts with F-actin. Interacts with SCARF1; the interaction occurs in embryonic dorsal root ganglions at 18 dpc and induces neurite-like outgrowth. Interacts with PLCE1. Interacts with ACTR2 and ACTR3; associates with the ARP2/3 complex. As to expression, expressed in dorsal root ganglion (DRG) neurons and superior cervical ganglia (SCG). Expressed in podocytes.

It localises to the cytoplasm. It is found in the cytoskeleton. Its subcellular location is the cell projection. The protein resides in the neuron projection. The protein localises to the axon. It localises to the lamellipodium. It is found in the cell junction. Its subcellular location is the focal adhesion. Ca(2+)-regulated actin-binding protein which plays an important role in actin bundling. May have a unique function in the morphogenesis of neuronal cells which form ganglia. Required for SREC1-mediated regulation of neurite-like outgrowth. Plays a role in regenerative sensory axon outgrowth and remodeling processes after peripheral injury in neonates. Involved in the formation of long fine actin-containing filopodia-like structures in fibroblast. Plays a role in ciliogenesis. In podocytes, controls lamellipodia formation through the regulation of EGF-induced diacylglycerol generation by PLCE1 and ARP2/3 complex assembly. This Rattus norvegicus (Rat) protein is Advillin.